We begin with the raw amino-acid sequence, 375 residues long: Growth/differentiation factor 8 (375 aa).

Residues Met-1–Leu-23 form the signal peptide. Residues Asp-24–Arg-266 constitute a propeptide that is removed on maturation. Asn-71 is a glycosylation site (N-linked (GlcNAc...) asparagine). Cystine bridges form between Cys-272–Cys-282, Cys-281–Cys-340, Cys-309–Cys-372, and Cys-313–Cys-374.

It belongs to the TGF-beta family. As to quaternary structure, homodimer; disulfide-linked.

The protein localises to the secreted. Its function is as follows. Acts specifically as a negative regulator of skeletal muscle growth. The protein is Growth/differentiation factor 8 (MSTN) of Meleagris gallopavo (Wild turkey).